The chain runs to 389 residues: Na(+)/H(+) antiporter NhaA (389 aa).

Transmembrane regions (helical) follow at residues 14-34 (AGGI…NSPL), 59-79 (LILW…GLEV), 95-115 (SLPT…YLLF), 124-144 (AGWA…MALL), 154-174 (VFLL…IALF), 177-197 (TDLS…LVGL), 213-233 (LILW…GVII), 257-277 (PWST…VYVG), 292-312 (IALG…YIAV), 328-348 (IAPV…IASL), and 363-383 (LGTL…LSKV).

Belongs to the NhaA Na(+)/H(+) (TC 2.A.33) antiporter family.

It is found in the cell inner membrane. It carries out the reaction Na(+)(in) + 2 H(+)(out) = Na(+)(out) + 2 H(+)(in). Its function is as follows. Na(+)/H(+) antiporter that extrudes sodium in exchange for external protons. This is Na(+)/H(+) antiporter NhaA from Shewanella baltica (strain OS195).